The sequence spans 322 residues: Acetyl-coenzyme A carboxylase carboxyl transferase subunit alpha (322 aa).

A CoA carboxyltransferase C-terminal domain is found at 39–293; the sequence is RLASKSQQLT…KRALAESLRQ (255 aa).

Belongs to the AccA family. Acetyl-CoA carboxylase is a heterohexamer composed of biotin carboxyl carrier protein (AccB), biotin carboxylase (AccC) and two subunits each of ACCase subunit alpha (AccA) and ACCase subunit beta (AccD).

It is found in the cytoplasm. It carries out the reaction N(6)-carboxybiotinyl-L-lysyl-[protein] + acetyl-CoA = N(6)-biotinyl-L-lysyl-[protein] + malonyl-CoA. The protein operates within lipid metabolism; malonyl-CoA biosynthesis; malonyl-CoA from acetyl-CoA: step 1/1. Functionally, component of the acetyl coenzyme A carboxylase (ACC) complex. First, biotin carboxylase catalyzes the carboxylation of biotin on its carrier protein (BCCP) and then the CO(2) group is transferred by the carboxyltransferase to acetyl-CoA to form malonyl-CoA. The polypeptide is Acetyl-coenzyme A carboxylase carboxyl transferase subunit alpha (Ralstonia pickettii (strain 12J)).